Consider the following 167-residue polypeptide: Signal peptidase complex subunit 3A (167 aa).

The Cytoplasmic portion of the chain corresponds to methionine 1–leucine 11. Residues leucine 12–phenylalanine 32 traverse the membrane as a helical; Signal-anchor for type II membrane protein segment. The Lumenal segment spans residues serine 33–arginine 167. N-linked (GlcNAc...) asparagine glycosylation is present at asparagine 136.

This sequence belongs to the SPCS3 family. Component of the signal peptidase complex (SPC) composed of a catalytic subunit SEC11 and three accessory subunits SPCS1, SPCS2 and SPCS3. The complex induces a local thinning of the ER membrane which is used to measure the length of the signal peptide (SP) h-region of protein substrates. This ensures the selectivity of the complex towards h-regions shorter than 18-20 amino acids.

The protein localises to the endoplasmic reticulum membrane. Its function is as follows. Essential component of the signal peptidase complex (SPC) which catalyzes the cleavage of N-terminal signal sequences from nascent proteins as they are translocated into the lumen of the endoplasmic reticulum. Essential for the SPC catalytic activity, possibly by stabilizing and positioning the active center of the complex close to the lumenal surface. The polypeptide is Signal peptidase complex subunit 3A (Arabidopsis thaliana (Mouse-ear cress)).